A 558-amino-acid polypeptide reads, in one-letter code: Glucose-6-phosphate isomerase (558 aa).

E362 serves as the catalytic Proton donor. Active-site residues include H393 and K523.

The protein belongs to the GPI family.

Its subcellular location is the cytoplasm. The catalysed reaction is alpha-D-glucose 6-phosphate = beta-D-fructose 6-phosphate. It participates in carbohydrate degradation; glycolysis; D-glyceraldehyde 3-phosphate and glycerone phosphate from D-glucose: step 2/4. The chain is Glucose-6-phosphate isomerase (Pgi) from Drosophila melanogaster (Fruit fly).